Here is a 346-residue protein sequence, read N- to C-terminus: 3 beta-hydroxysteroid dehydrogenase/Delta 5--&gt;4-isomerase (346 aa).

Catalysis depends on Tyr147, which acts as the Proton acceptor. Lys151 is an NAD(+) binding site.

Belongs to the 3-beta-HSD family.

It catalyses the reaction a 3beta-hydroxy-Delta(5)-steroid + NAD(+) = a 3-oxo-Delta(5)-steroid + NADH + H(+). The enzyme catalyses a 3-oxo-Delta(5)-steroid = a 3-oxo-Delta(4)-steroid. The protein operates within lipid metabolism; steroid biosynthesis. Its function is as follows. Catalyzes the oxidative conversion of Delta(5)-ene-3-beta-hydroxy steroid, and the oxidative conversion of ketosteroids. The 3-beta-HSD enzymatic system plays a crucial role in the biosynthesis of all classes of hormonal steroids. During viral infection, steroid production contributes to virulence by inhibiting the host inflammatory response. The chain is 3 beta-hydroxysteroid dehydrogenase/Delta 5--&gt;4-isomerase (OPG174) from Vaccinia virus (strain Western Reserve) (VACV).